A 424-amino-acid polypeptide reads, in one-letter code: UPF0415 protein C7orf25 homolog (424 aa).

This sequence belongs to the UPF0415 family.

The sequence is that of UPF0415 protein C7orf25 homolog from Xenopus tropicalis (Western clawed frog).